The primary structure comprises 719 residues: MRGALCRPDVLMRPCLRPCARLPRLPPSRRLPFSITTSCQQLPRTSPGRAGFSSLASLESRQNDRTRCFSALRSLSSSQLLPTTAPVLARHNSTTATSQMPLERKAIEIEKRIAAIPLERYRNFCIVAHIDHGKSTLSDRLLEHTGTITAGDGNKQVLDKLDVERERGITVKAQTCTMIYKHRDGLDYLLHLVDTPGHVDFRAEVTRSYSSCSGALLLVDASQGVQAQTVANFYLAFAQGLSLVPVVNKIDMASADVPRVLEQLETVFELDTSTAVKVSAKTGQGVGEILPAVISNVPAPVGDAKKPLRMLLVDSWYDTFKGVVLLVRLFDGTLKQGDKVYSFATGNEYIVGEVGIQYPDAVPQKVLRAGQVGYVFFNPGMKRIQDAKLGDTFTNVGCEDTVEPLPGFEEPKPMVFVAAFPTNQDDYGRLADSIAHLVLNDRSVTLQKDYSEALGAGWRLGFLGSLHCSVFQDRLRQEHGASIIITEPAVPTKIIWSTGEELIVTNPAEFPDPDDHRIRSATLYEPFVNATVTLPEEYVGRCIEICENARGVQKSLEFFTATQVILKYELPAASLVDDLFGKLKGATKGYATLDYEDAGWRQAQLVKLNLLVNKKAVDAVARIVHVSQVERLGRQWVTKFKEHVDRQMFEVIIQAAAGRRIVARETIKPFRKDVLAKLHASDITRRRKLLEKQKAGRKRLRAVGNVIIDQSAFQKFLSK.

The transit peptide at 1–75 (MRGALCRPDV…TRCFSALRSL (75 aa)) directs the protein to the mitochondrion. Residues 119–301 (ERYRNFCIVA…AVISNVPAPV (183 aa)) enclose the tr-type G domain. GTP-binding positions include 128–135 (AHIDHGKS), 194–198 (DTPGH), and 248–251 (NKID).

It belongs to the TRAFAC class translation factor GTPase superfamily. Classic translation factor GTPase family. LepA subfamily.

It localises to the mitochondrion inner membrane. The enzyme catalyses GTP + H2O = GDP + phosphate + H(+). In terms of biological role, promotes mitochondrial protein synthesis. May act as a fidelity factor of the translation reaction, by catalyzing a one-codon backward translocation of tRNAs on improperly translocated ribosomes. Binds to mitochondrial ribosomes in a GTP-dependent manner. The sequence is that of Translation factor guf1, mitochondrial (guf1) from Neurospora crassa (strain ATCC 24698 / 74-OR23-1A / CBS 708.71 / DSM 1257 / FGSC 987).